The chain runs to 110 residues: Large ribosomal subunit protein uL22 (110 aa).

A compositionally biased stretch (basic residues) spans 84–95 (ARGTASKIRKPT). The disordered stretch occupies residues 84–110 (ARGTASKIRKPTSHVMVEVSKPEKKEA).

This sequence belongs to the universal ribosomal protein uL22 family. Part of the 50S ribosomal subunit.

Its function is as follows. This protein binds specifically to 23S rRNA; its binding is stimulated by other ribosomal proteins, e.g. L4, L17, and L20. It is important during the early stages of 50S assembly. It makes multiple contacts with different domains of the 23S rRNA in the assembled 50S subunit and ribosome. In terms of biological role, the globular domain of the protein is located near the polypeptide exit tunnel on the outside of the subunit, while an extended beta-hairpin is found that lines the wall of the exit tunnel in the center of the 70S ribosome. This Campylobacter concisus (strain 13826) protein is Large ribosomal subunit protein uL22.